Here is a 72-residue protein sequence, read N- to C-terminus: MSDKSIKMQAKVLKMFSTDKYELELLENKVIIKGHISGKMRIHKIRILPGDIVDVEISPHDLSNGRITYRHK.

The S1-like domain maps to 1 to 72 (MSDKSIKMQA…SNGRITYRHK (72 aa)).

The protein belongs to the IF-1 family. As to quaternary structure, component of the 30S ribosomal translation pre-initiation complex which assembles on the 30S ribosome in the order IF-2 and IF-3, IF-1 and N-formylmethionyl-tRNA(fMet); mRNA recruitment can occur at any time during PIC assembly.

The protein resides in the cytoplasm. Its function is as follows. One of the essential components for the initiation of protein synthesis. Stabilizes the binding of IF-2 and IF-3 on the 30S subunit to which N-formylmethionyl-tRNA(fMet) subsequently binds. Helps modulate mRNA selection, yielding the 30S pre-initiation complex (PIC). Upon addition of the 50S ribosomal subunit IF-1, IF-2 and IF-3 are released leaving the mature 70S translation initiation complex. This is Translation initiation factor IF-1 from Mycoplasmopsis pulmonis (strain UAB CTIP) (Mycoplasma pulmonis).